Here is a 125-residue protein sequence, read N- to C-terminus: Ribonuclease P protein component (125 aa).

This sequence belongs to the RnpA family. As to quaternary structure, consists of a catalytic RNA component (M1 or rnpB) and a protein subunit.

The catalysed reaction is Endonucleolytic cleavage of RNA, removing 5'-extranucleotides from tRNA precursor.. In terms of biological role, RNaseP catalyzes the removal of the 5'-leader sequence from pre-tRNA to produce the mature 5'-terminus. It can also cleave other RNA substrates such as 4.5S RNA. The protein component plays an auxiliary but essential role in vivo by binding to the 5'-leader sequence and broadening the substrate specificity of the ribozyme. This chain is Ribonuclease P protein component, found in Rhodococcus jostii (strain RHA1).